The following is a 155-amino-acid chain: Protein FAM162B (155 aa).

A helical transmembrane segment spans residues 95-114 (VKACYIMMGLTIFACLVMIV).

Belongs to the UPF0389 family.

The protein resides in the membrane. The chain is Protein FAM162B (fam162b) from Danio rerio (Zebrafish).